The chain runs to 83 residues: U5-theraphotoxin-Hs1a 4 (83 aa).

The first 21 residues, 1 to 21, serve as a signal peptide directing secretion; sequence MKTSMFLTLTGLVLLFVDCYA. A propeptide spanning residues 22-49 is cleaved from the precursor; that stretch reads SESEEKEFPKELLSSIFAADSDFKVEER. 3 disulfides stabilise this stretch: C51-C63, C56-C68, and C62-C75.

It belongs to the neurotoxin 10 (Hwtx-1) family. 51 (Hntx-8) subfamily. Hntx-8 sub-subfamily. Expressed by the venom gland.

It localises to the secreted. In terms of biological role, agglutinates erythrocytes. The protein is U5-theraphotoxin-Hs1a 4 of Cyriopagopus schmidti (Chinese bird spider).